Here is a 302-residue protein sequence, read N- to C-terminus: Quinolinate synthase (302 aa).

Iminosuccinate contacts are provided by His24 and Ser41. Position 86 (Cys86) interacts with [4Fe-4S] cluster. Iminosuccinate contacts are provided by residues 112–114 (YVN) and Ser129. Cys173 contributes to the [4Fe-4S] cluster binding site. Iminosuccinate-binding positions include 199–201 (HPE) and Thr216. Cys259 provides a ligand contact to [4Fe-4S] cluster.

The protein belongs to the quinolinate synthase family. Type 2 subfamily. The cofactor is [4Fe-4S] cluster.

The protein resides in the cytoplasm. It carries out the reaction iminosuccinate + dihydroxyacetone phosphate = quinolinate + phosphate + 2 H2O + H(+). Its pathway is cofactor biosynthesis; NAD(+) biosynthesis; quinolinate from iminoaspartate: step 1/1. Functionally, catalyzes the condensation of iminoaspartate with dihydroxyacetone phosphate to form quinolinate. The chain is Quinolinate synthase from Thermococcus onnurineus (strain NA1).